The chain runs to 313 residues: Acetylglutamate kinase (313 aa).

Residues 84-85 (GG), R106, and N210 contribute to the substrate site.

This sequence belongs to the acetylglutamate kinase family. ArgB subfamily.

It is found in the cytoplasm. It catalyses the reaction N-acetyl-L-glutamate + ATP = N-acetyl-L-glutamyl 5-phosphate + ADP. It functions in the pathway amino-acid biosynthesis; L-arginine biosynthesis; N(2)-acetyl-L-ornithine from L-glutamate: step 2/4. Functionally, catalyzes the ATP-dependent phosphorylation of N-acetyl-L-glutamate. This Gluconacetobacter diazotrophicus (strain ATCC 49037 / DSM 5601 / CCUG 37298 / CIP 103539 / LMG 7603 / PAl5) protein is Acetylglutamate kinase.